A 108-amino-acid chain; its full sequence is Glutaredoxin-1 (108 aa).

Positions 3-106 (EEFVQQRLAN…DILSSIGVLR (104 aa)) constitute a Glutaredoxin domain. Cys23 and Cys26 are oxidised to a cystine.

It belongs to the glutaredoxin family.

Its subcellular location is the virion. Its function is as follows. Displays thioltransferase and dehydroascorbate reductase activities. This is Glutaredoxin-1 (OPG075) from Vaccinia virus (strain Copenhagen) (VACV).